Reading from the N-terminus, the 499-residue chain is Glutamyl-tRNA(Gln) amidotransferase subunit A (499 aa).

Catalysis depends on charge relay system residues Lys-76 and Ser-151. Catalysis depends on Ser-175, which acts as the Acyl-ester intermediate.

It belongs to the amidase family. GatA subfamily. In terms of assembly, heterotrimer of A, B and C subunits.

It catalyses the reaction L-glutamyl-tRNA(Gln) + L-glutamine + ATP + H2O = L-glutaminyl-tRNA(Gln) + L-glutamate + ADP + phosphate + H(+). Functionally, allows the formation of correctly charged Gln-tRNA(Gln) through the transamidation of misacylated Glu-tRNA(Gln) in organisms which lack glutaminyl-tRNA synthetase. The reaction takes place in the presence of glutamine and ATP through an activated gamma-phospho-Glu-tRNA(Gln). The protein is Glutamyl-tRNA(Gln) amidotransferase subunit A of Rhodopirellula baltica (strain DSM 10527 / NCIMB 13988 / SH1).